Here is a 422-residue protein sequence, read N- to C-terminus: Elongation factor 1-alpha (422 aa).

Residues 5–221 (KPHMNLAVIG…NSLKEPEKPS (217 aa)) form the tr-type G domain. Positions 14–21 (GHIDHGKS) are G1. 14–21 (GHIDHGKS) contacts GTP. S21 contacts Mg(2+). A G2 region spans residues 70-74 (GITID). The interval 91–94 (DCPG) is G3. Residues 91-95 (DCPGH) and 146-149 (NKMD) contribute to the GTP site. The G4 stretch occupies residues 146 to 149 (NKMD). Positions 185–187 (SAF) are G5.

It belongs to the TRAFAC class translation factor GTPase superfamily. Classic translation factor GTPase family. EF-Tu/EF-1A subfamily.

The protein localises to the cytoplasm. The catalysed reaction is GTP + H2O = GDP + phosphate + H(+). Functionally, GTP hydrolase that promotes the GTP-dependent binding of aminoacyl-tRNA to the A-site of ribosomes during protein biosynthesis. The protein is Elongation factor 1-alpha of Methanosarcina mazei (strain ATCC BAA-159 / DSM 3647 / Goe1 / Go1 / JCM 11833 / OCM 88) (Methanosarcina frisia).